Consider the following 320-residue polypeptide: Flavonol 4'-sulfotransferase (320 aa).

Lys69–Trp74 contacts 3'-phosphoadenylyl sulfate. The active-site Proton acceptor is the His129. 3'-phosphoadenylyl sulfate-binding positions include Arg151, Ser159, Tyr217, and Arg285 to Ala287.

This sequence belongs to the sulfotransferase 1 family. Highest in shoot tips and lowest in mature leaves and roots.

The protein resides in the cytoplasm. It carries out the reaction quercetin 3-sulfate + 3'-phosphoadenylyl sulfate = quercetin 3,4'-bissulfate + adenosine 3',5'-bisphosphate + H(+). With respect to regulation, no requirement for divalent cations and insensitive to p-chloromercuribenzoate, iodoacetate, or iodoacetamide. In terms of biological role, sulfotransferase that utilizes 3'-phospho-5'-adenylyl sulfate (PAPS) as sulfonate donor to catalyze the sulfate conjugation of quercetin 3-sulfate &gt; kaempferol 3-sulfate &gt; isorhamnetin 3-sulfate &gt; patuletin 3-sulfate, but not tamarixetin 3-sulfate. O-sulfation of position 4' of flavonol. May play a role in auxin transport. The sequence is that of Flavonol 4'-sulfotransferase from Flaveria chlorifolia (Clasping yellowtops).